The chain runs to 109 residues: Flagellar hook-basal body complex protein FliE (109 aa).

The tract at residues 1-38 (MQAIHNDKSLLSPFSELNTDNRTKREESGNAFKEQKGG) is disordered. Residues 19-38 (TDNRTKREESGNAFKEQKGG) show a composition bias toward basic and acidic residues.

The protein belongs to the FliE family.

The protein resides in the bacterial flagellum basal body. In Helicobacter pylori (strain G27), this protein is Flagellar hook-basal body complex protein FliE.